We begin with the raw amino-acid sequence, 2763 residues long: Large tegument protein deneddylase (2763 aa).

The tract at residues 1–247 is deubiquitination activity; the sequence is MDIIPPIAVT…CDTYFTDEQY (247 aa). The Peptidase C76 domain occupies 12-237; that stretch reads AGVGSRNQFD…SSAVTLIYGS (226 aa). Catalysis depends on residues C32, D168, and H170. The interaction with inner tegument protein stretch occupies residues 495-523; it reads LELFINLTILRLTGFVVENGTRTHHGATS. Residues 2456–2476 form a disordered region; sequence VRPAQPAQPAQPAQPAQTVQP. 5 repeat units span residues 2458–2460, 2461–2463, 2464–2466, 2467–2469, and 2470–2472. Residues 2458 to 2472 are 5 X 3 AA repeats of P-A-Q; it reads PAQPAQPAQPAQPAQ. A compositionally biased stretch (low complexity) spans 2459 to 2476; sequence AQPAQPAQPAQPAQTVQP.

The protein belongs to the herpesviridae large tegument protein family. In terms of assembly, interacts with host CUL1 and CUL4A; these interactions inhibit the E3 ligase activity of cullins. Interacts with inner tegument protein. Interacts with capsid vertex specific component CVC2. Interacts with the major capsid protein/MCP.

The protein localises to the virion tegument. The protein resides in the host cytoplasm. It is found in the host nucleus. It carries out the reaction Thiol-dependent hydrolysis of ester, thioester, amide, peptide and isopeptide bonds formed by the C-terminal Gly of ubiquitin (a 76-residue protein attached to proteins as an intracellular targeting signal).. Large tegument protein that plays multiple roles in the viral cycle. During viral entry, remains associated with the capsid while most of the tegument is detached and participates in the capsid transport toward the host nucleus. Plays a role in the routing of the capsid at the nuclear pore complex and subsequent uncoating. Within the host nucleus, acts as a deneddylase and promotes the degradation of nuclear CRLs (cullin-RING ubiquitin ligases) and thereby stabilizes nuclear CRL substrates, while cytoplasmic CRLs remain unaffected. These modifications prevent host cell cycle S-phase progression and create a favorable environment allowing efficient viral genome replication. Participates later in the secondary envelopment of capsids. Indeed, plays a linker role for the association of the outer viral tegument to the capsids together with the inner tegument protein. The chain is Large tegument protein deneddylase from Homo sapiens (Human).